The primary structure comprises 351 residues: Peroxidase C1B (351 aa).

A signal peptide spans 1–28 (MHSPSSTSFTWILITLGCLAFYASLSDA). Intrachain disulfides connect C39–C119, C72–C77, C125–C329, and C205–C237. Residue N41 is glycosylated (N-linked (GlcNAc...) asparagine). The active-site Proton acceptor is H70. Positions 71, 74, 76, 78, and 80 each coordinate Ca(2+). Residue N85 is glycosylated (N-linked (GlcNAc...) asparagine). P167 lines the substrate pocket. Residue H198 participates in heme b binding. T199 is a Ca(2+) binding site. N-linked (GlcNAc...) asparagine glycosylation is found at N214, N226, and N242. Ca(2+) contacts are provided by D250, T253, and D258. A glycan (N-linked (GlcNAc...) asparagine) is linked at N283.

It belongs to the peroxidase family. Classical plant (class III) peroxidase subfamily. The cofactor is Ca(2+). Heme b is required as a cofactor.

The protein localises to the secreted. It is found in the vacuole. The catalysed reaction is 2 a phenolic donor + H2O2 = 2 a phenolic radical donor + 2 H2O. Removal of H(2)O(2), oxidation of toxic reductants, biosynthesis and degradation of lignin, suberization, auxin catabolism, response to environmental stresses such as wounding, pathogen attack and oxidative stress. These functions might be dependent on each isozyme/isoform in each plant tissue. The chain is Peroxidase C1B (PRXC1B) from Armoracia rusticana (Horseradish).